The following is a 279-amino-acid chain: Dermonecrotic toxin StSicTox-betaIB1i (279 aa).

H12 is an active-site residue. Positions 32 and 34 each coordinate Mg(2+). The active-site Nucleophile is H48. Intrachain disulfides connect C52–C58 and C54–C198. D92 is a binding site for Mg(2+).

The protein belongs to the arthropod phospholipase D family. Class II subfamily. Class IIb sub-subfamily. It depends on Mg(2+) as a cofactor. In terms of tissue distribution, expressed by the venom gland.

It is found in the secreted. The catalysed reaction is an N-(acyl)-sphingosylphosphocholine = an N-(acyl)-sphingosyl-1,3-cyclic phosphate + choline. It catalyses the reaction N-hexanoyl-sphing-4-enine-1-phosphocholine = N-(hexanoyl)-sphing-4-enine-1,3-cyclic phosphate + choline. It carries out the reaction an N-(acyl)-sphingosylphosphoethanolamine = an N-(acyl)-sphingosyl-1,3-cyclic phosphate + ethanolamine. The enzyme catalyses N-dodecanoyl-heptadecasphing-4-enine-1-phosphoethanolamine = N-dodecanoyl-heptadecasphing-4-enine-1,3-cyclic phosphate + ethanolamine. The catalysed reaction is a 1-acyl-sn-glycero-3-phosphoethanolamine = a 1-acyl-sn-glycero-2,3-cyclic phosphate + ethanolamine. It catalyses the reaction 1-tetradecanoyl-sn-glycero-3-phosphoethanolamine = 1-tetradecanoyl-sn-glycero-2,3-cyclic phosphate + ethanolamine. Dermonecrotic toxins cleave the phosphodiester linkage between the phosphate and headgroup of certain phospholipids (sphingolipid and lysolipid substrates), forming an alcohol (often choline) and a cyclic phosphate. This toxin acts on lysophosphatidylethanolamine (LPE) and ceramide phosphoethanolamine (CPE) with high activity. This toxin acts on sphingomyelin (SM) with very low activity and is not active on lysophosphatidylserine (LPS), lysophosphatidylcholine (LPC) and lysophosphatidylglycerol (LPG). It acts by transphosphatidylation, releasing exclusively cyclic phosphate as second products. It is not surprising that spider toxins have affinity for ethanolamine-containing sphingolipids since they are common in insect prey. Induces dermonecrosis, hemolysis, increased vascular permeability, edema, inflammatory response, and platelet aggregation. The polypeptide is Dermonecrotic toxin StSicTox-betaIB1i (Sicarius terrosus (Cave spider)).